We begin with the raw amino-acid sequence, 425 residues long: Putative nucleoside transporter YegT (425 aa).

Residues 1 to 8 (MKTTAKLS) lie on the Periplasmic side of the membrane. The helical transmembrane segment at 9 to 29 (FMMFVEWFIWGAWFVPLWLWL) threads the bilayer. Residues 30 to 38 (SKSGFSAGE) are Cytoplasmic-facing. Residues 39–59 (IGWSYACTAIAAILSPILVGS) form a helical membrane-spanning segment. Over 60–63 (ITDR) the chain is Periplasmic. The chain crosses the membrane as a helical span at residues 64–84 (FFSAQKVLAVLMFAGALLMYF). The Cytoplasmic portion of the chain corresponds to 85–90 (AAQQTT). Residues 91 to 111 (FAGFFPLLLAYSLTYMPTIAL) form a helical membrane-spanning segment. At 112–131 (TNSIAFANVPDVERDFPRIR) the chain is on the periplasmic side. The chain crosses the membrane as a helical span at residues 132-152 (VMGTIGWIASGLACGFLPQIL). Over 153–161 (GYADISPTN) the chain is Cytoplasmic. A helical membrane pass occupies residues 162 to 182 (IPLLITAGSSALLGVFAFFLP). Residues 183–210 (DTPPKSTGKMDIKVMLGLDALILLRDKN) are Periplasmic-facing. Residues 211–231 (FLVFFFCSFLFAMPLAFYYIF) traverse the membrane as a helical segment. Residues 232-244 (ANGYLTEVGMKNA) lie on the Cytoplasmic side of the membrane. A helical transmembrane segment spans residues 245–265 (TGWMTLGQFSEIFFMLALPFF). Over 266–287 (TKRFGIKKVLLLGLVTAAIRYG) the chain is Periplasmic. A helical transmembrane segment spans residues 288–308 (FFIYGSADEYFTYALLFLGIL). The Cytoplasmic portion of the chain corresponds to 309–339 (LHGVSYDFYYVTAYIYVDKKAPVHMRTAAQG). The helical transmembrane segment at 340–360 (LITLCCQGFGSLLGYRLGGVM) threads the bilayer. Residues 361 to 379 (MEKMFAYQEPVNGLTFNWS) lie on the Periplasmic side of the membrane. The helical transmembrane segment at 380–400 (GMWTFGAVMIAIIAVLFMIFF) threads the bilayer. Topologically, residues 401–425 (RESDNEITAIKVDDRDIALTQGEVK) are cytoplasmic.

The protein belongs to the major facilitator superfamily. Nucleoside:H(+) symporter (NHS) (TC 2.A.1.10) family.

It localises to the cell inner membrane. Its function is as follows. Could be involved in nucleoside transport. The protein is Putative nucleoside transporter YegT (yegT) of Escherichia coli (strain K12).